Consider the following 201-residue polypeptide: Recombination protein RecR (201 aa).

A C4-type zinc finger spans residues 60-75 (CSVCGNVDTTDPCSIC). The Toprim domain occupies 83 to 178 (TTIIVVEDVA…KITRLAHGVP (96 aa)).

This sequence belongs to the RecR family.

May play a role in DNA repair. It seems to be involved in an RecBC-independent recombinational process of DNA repair. It may act with RecF and RecO. This chain is Recombination protein RecR, found in Bartonella quintana (strain Toulouse) (Rochalimaea quintana).